Reading from the N-terminus, the 399-residue chain is 26S proteasome regulatory subunit S10B homolog B (399 aa).

180–187 is a binding site for ATP; sequence GPPGTGKT. Lysine 203 is covalently cross-linked (Glycyl lysine isopeptide (Lys-Gly) (interchain with G-Cter in ubiquitin)).

This sequence belongs to the AAA ATPase family. As to quaternary structure, component of the 19S regulatory particle (RP/PA700) base subcomplex of the 26S proteasome. The 26S proteasome is composed of a core protease (CP), known as the 20S proteasome, capped at one or both ends by the 19S regulatory particle (RP/PA700). The RP/PA700 complex is composed of at least 17 different subunits in two subcomplexes, the base and the lid, which form the portions proximal and distal to the 20S proteolytic core, respectively.

It localises to the cytoplasm. The protein localises to the nucleus. Its function is as follows. The 26S proteasome is involved in the ATP-dependent degradation of ubiquitinated proteins. The regulatory (or ATPase) complex confers ATP dependency and substrate specificity to the 26S complex. The protein is 26S proteasome regulatory subunit S10B homolog B (RPT4B) of Arabidopsis thaliana (Mouse-ear cress).